The primary structure comprises 359 residues: DNA replication and repair protein RecF (359 aa).

30-37 (GNNGSGKT) lines the ATP pocket.

Belongs to the RecF family.

The protein localises to the cytoplasm. In terms of biological role, the RecF protein is involved in DNA metabolism; it is required for DNA replication and normal SOS inducibility. RecF binds preferentially to single-stranded, linear DNA. It also seems to bind ATP. This chain is DNA replication and repair protein RecF, found in Haemophilus influenzae (strain 86-028NP).